A 150-amino-acid chain; its full sequence is UPF0735 ACT domain-containing protein Helmi_18680 (150 aa).

The region spanning 72–147 is the ACT domain; the sequence is SVSLLLEHHP…GVRSAQLVGS (76 aa).

Belongs to the UPF0735 family.

This Heliobacterium modesticaldum (strain ATCC 51547 / Ice1) protein is UPF0735 ACT domain-containing protein Helmi_18680.